A 292-amino-acid chain; its full sequence is Ribosomal protein L11 methyltransferase (292 aa).

S-adenosyl-L-methionine contacts are provided by T144, G165, D187, and N229.

The protein belongs to the methyltransferase superfamily. PrmA family.

The protein localises to the cytoplasm. The catalysed reaction is L-lysyl-[protein] + 3 S-adenosyl-L-methionine = N(6),N(6),N(6)-trimethyl-L-lysyl-[protein] + 3 S-adenosyl-L-homocysteine + 3 H(+). Functionally, methylates ribosomal protein L11. The polypeptide is Ribosomal protein L11 methyltransferase (Pseudomonas putida (strain ATCC 700007 / DSM 6899 / JCM 31910 / BCRC 17059 / LMG 24140 / F1)).